A 166-amino-acid chain; its full sequence is Heavy metal-associated isoprenylated plant protein 45 (166 aa).

An HMA domain is found at 15-78 (LSIVELLVDM…MVKRTGRTAE (64 aa)). A metal cation contacts are provided by Cys-26 and Cys-29. Cys-163 carries the post-translational modification Cysteine methyl ester. A lipid anchor (S-farnesyl cysteine) is attached at Cys-163. The propeptide at 164–166 (TIM) is removed in mature form.

The protein belongs to the HIPP family.

Its function is as follows. Heavy-metal-binding protein. The protein is Heavy metal-associated isoprenylated plant protein 45 of Arabidopsis thaliana (Mouse-ear cress).